Here is a 377-residue protein sequence, read N- to C-terminus: GTP 3',8-cyclase (377 aa).

Positions 1-29 (MTTRLYLSPTPPRNDREGASKSTSASIKH) are disordered. In terms of domain architecture, Radical SAM core spans 45-271 (RFGRIARDLR…FTLSPAKEPR (227 aa)). Arginine 54 is a GTP binding site. Cysteine 61 and cysteine 65 together coordinate [4Fe-4S] cluster. Tyrosine 67 lines the S-adenosyl-L-methionine pocket. [4Fe-4S] cluster is bound at residue cysteine 68. Arginine 105 contributes to the GTP binding site. Residue glycine 109 participates in S-adenosyl-L-methionine binding. Threonine 140 contributes to the GTP binding site. Serine 164 is an S-adenosyl-L-methionine binding site. Lysine 201 is a GTP binding site. An S-adenosyl-L-methionine-binding site is contributed by methionine 235. 2 residues coordinate [4Fe-4S] cluster: cysteine 304 and cysteine 307. 309–311 (RSR) lines the GTP pocket. Cysteine 321 contacts [4Fe-4S] cluster.

It belongs to the radical SAM superfamily. MoaA family. In terms of assembly, monomer and homodimer. [4Fe-4S] cluster is required as a cofactor.

It carries out the reaction GTP + AH2 + S-adenosyl-L-methionine = (8S)-3',8-cyclo-7,8-dihydroguanosine 5'-triphosphate + 5'-deoxyadenosine + L-methionine + A + H(+). The protein operates within cofactor biosynthesis; molybdopterin biosynthesis. Its function is as follows. Catalyzes the cyclization of GTP to (8S)-3',8-cyclo-7,8-dihydroguanosine 5'-triphosphate. This chain is GTP 3',8-cyclase, found in Corynebacterium glutamicum (strain ATCC 13032 / DSM 20300 / JCM 1318 / BCRC 11384 / CCUG 27702 / LMG 3730 / NBRC 12168 / NCIMB 10025 / NRRL B-2784 / 534).